The following is a 289-amino-acid chain: ATP phosphoribosyltransferase (289 aa).

Belongs to the ATP phosphoribosyltransferase family. Long subfamily. Requires Mg(2+) as cofactor.

The protein localises to the cytoplasm. The enzyme catalyses 1-(5-phospho-beta-D-ribosyl)-ATP + diphosphate = 5-phospho-alpha-D-ribose 1-diphosphate + ATP. Its pathway is amino-acid biosynthesis; L-histidine biosynthesis; L-histidine from 5-phospho-alpha-D-ribose 1-diphosphate: step 1/9. Its activity is regulated as follows. Feedback inhibited by histidine. In terms of biological role, catalyzes the condensation of ATP and 5-phosphoribose 1-diphosphate to form N'-(5'-phosphoribosyl)-ATP (PR-ATP). Has a crucial role in the pathway because the rate of histidine biosynthesis seems to be controlled primarily by regulation of HisG enzymatic activity. In Methanosarcina barkeri (strain Fusaro / DSM 804), this protein is ATP phosphoribosyltransferase.